The primary structure comprises 528 residues: Nucleoporin ASM4 (528 aa).

One copy of the FG 1 repeat lies at 2–3; that stretch reads FG. The segment covering 23–50 has biased composition (low complexity); it reads TTQMFQSQSQLQPQPQPQPQQQQQHLQF. Disordered regions lie at residues 23–64 and 88–144; these read TTQM…FGNS and IKNG…SMNA. Composition is skewed to polar residues over residues 51 to 64 and 97 to 108; these read NGSS…FGNS and QHGQGNNPSWVN. One copy of the FG 2 repeat lies at 61-62; that stretch reads FG. Basic residues predominate over residues 110-125; sequence PKKRFTPHTVIRRKTT. The segment covering 127-141 has biased composition (low complexity); that stretch reads QNSSSDINQNDDSSS. FG repeat units follow at residues 195–196, 274–275, and 291–292; these read FG. Residues 265–394 enclose the RRM Nup35-type domain; sequence SSSLSAIIVF…IPYSKNAVEQ (130 aa). 2 positions are modified to phosphoserine: serine 458 and serine 464. Residues 490 to 510 are a coiled coil; the sequence is NLLRNLESKMRQQEAKYRNNE. The stretch at 523 to 524 is one FG 6 repeat; it reads FG.

As to quaternary structure, component of the nuclear pore complex (NPC). NPC constitutes the exclusive means of nucleocytoplasmic transport. NPCs allow the passive diffusion of ions and small molecules and the active, nuclear transport receptor-mediated bidirectional transport of macromolecules such as proteins, RNAs, ribonucleoparticles (RNPs), and ribosomal subunits across the nuclear envelope. Due to its 8-fold rotational symmetry, all subunits are present with 8 copies or multiples thereof. ASM4 may form a subcomplex with NUP53, NDC1, and NUP170. Post-translationally, phosphorylated by CDC28.

It is found in the nucleus. The protein localises to the nuclear pore complex. The protein resides in the nucleus membrane. In terms of biological role, functions as a component of the nuclear pore complex (NPC). NPC components, collectively referred to as nucleoporins (NUPs), can play the role of both NPC structural components and of docking or interaction partners for transiently associated nuclear transport factors. Active directional transport is assured by both, a Phe-Gly (FG) repeat affinity gradient for these transport factors across the NPC and a transport cofactor concentration gradient across the nuclear envelope (GSP1 and GSP2 GTPases associated predominantly with GTP in the nucleus, with GDP in the cytoplasm). May have a mitosis control function. The sequence is that of Nucleoporin ASM4 (ASM4) from Saccharomyces cerevisiae (strain ATCC 204508 / S288c) (Baker's yeast).